The sequence spans 677 residues: DNA-directed RNA polymerase subunit beta' (677 aa).

4 residues coordinate Zn(2+): Cys69, Cys71, Cys87, and Cys90. The Mg(2+) site is built by Asp489, Asp491, and Asp493.

This sequence belongs to the RNA polymerase beta' chain family. RpoC1 subfamily. In plastids the minimal PEP RNA polymerase catalytic core is composed of four subunits: alpha, beta, beta', and beta''. When a (nuclear-encoded) sigma factor is associated with the core the holoenzyme is formed, which can initiate transcription. Mg(2+) is required as a cofactor. It depends on Zn(2+) as a cofactor.

Its subcellular location is the plastid. The protein localises to the chloroplast. It catalyses the reaction RNA(n) + a ribonucleoside 5'-triphosphate = RNA(n+1) + diphosphate. Its function is as follows. DNA-dependent RNA polymerase catalyzes the transcription of DNA into RNA using the four ribonucleoside triphosphates as substrates. This is DNA-directed RNA polymerase subunit beta' from Spinacia oleracea (Spinach).